The primary structure comprises 118 residues: MIVIFCVIVKCEFFCIFTFIFGCFIIEADLWPAVFVACCTIIKMGRCNMCIFITAIIFKLKCIFKGRHGSMPIAMKSSRHNYQLTFLFKVNCVFISLPGGNKGFLLRLLSLAQPPVNF.

2 helical membrane passes run 7–27 and 34–58; these read VIVKCEFFCIFTFIFGCFIIE and VFVACCTIIKMGRCNMCIFITAIIF.

It is found in the membrane. This is an uncharacterized protein from Saccharomyces cerevisiae (strain ATCC 204508 / S288c) (Baker's yeast).